A 193-amino-acid polypeptide reads, in one-letter code: Ion-translocating oxidoreductase complex subunit A (193 aa).

The next 6 membrane-spanning stretches (helical) occupy residues 5–25, 39–59, 72–92, 102–122, 134–154, and 171–191; these read ILLI…FLGL, IGMG…AYLV, LRTL…EMVI, LLGI…VALL, VIYG…FAAL, and SIAL…SGLV.

Belongs to the NqrDE/RnfAE family. As to quaternary structure, the complex is composed of six subunits: RnfA, RnfB, RnfC, RnfD, RnfE and RnfG.

It is found in the cell inner membrane. Functionally, part of a membrane-bound complex that couples electron transfer with translocation of ions across the membrane. This chain is Ion-translocating oxidoreductase complex subunit A, found in Histophilus somni (strain 2336) (Haemophilus somnus).